We begin with the raw amino-acid sequence, 356 residues long: Alpha-N-acetylneuraminide alpha-2,8-sialyltransferase (356 aa).

The Cytoplasmic segment spans residues 1–29 (MSPCGRARRQTSRGAMAVLAWKFPRTRLP). The chain crosses the membrane as a helical; Signal-anchor for type II membrane protein span at residues 30 to 48 (MGASALCVVVLCWLYIFPV). Over 49–356 (YRLPNEKEIV…CEDTSLQPTS (308 aa)) the chain is Lumenal. Asparagine 71 and asparagine 119 each carry an N-linked (GlcNAc...) asparagine glycan. Cystine bridges form between cysteine 138/cysteine 287 and cysteine 152/cysteine 347. CMP-N-acetyl-beta-neuraminate contacts are provided by asparagine 143 and asparagine 166. Residues asparagine 214 and asparagine 245 are each glycosylated (N-linked (GlcNAc...) asparagine). The CMP-N-acetyl-beta-neuraminate site is built by serine 274, threonine 275, glycine 276, tryptophan 296, and histidine 310. Histidine 322 (proton donor/acceptor) is an active-site residue.

This sequence belongs to the glycosyltransferase 29 family.

The protein localises to the golgi apparatus membrane. It carries out the reaction an N-acetyl-alpha-neuraminyl-(2-&gt;3)-beta-D-galactosyl derivative + CMP-N-acetyl-beta-neuraminate = an N-acetyl-alpha-neuraminyl-(2-&gt;8)-N-acetyl-alpha-neuraminyl-(2-&gt;3)-beta-D-galactosyl derivative + CMP + H(+). The enzyme catalyses a ganglioside GM3 (d18:1(4E)) + CMP-N-acetyl-beta-neuraminate = a ganglioside GD3 (d18:1(4E)) + CMP + H(+). The catalysed reaction is a ganglioside GD3 (d18:1(4E)) + CMP-N-acetyl-beta-neuraminate = a ganglioside GT3 (d18:1(4E)) + CMP + H(+). It catalyses the reaction a ganglioside GD1a (d18:1(4E)) + CMP-N-acetyl-beta-neuraminate = a ganglioside GT1a (d18:1(4E)) + CMP + H(+). It carries out the reaction a ganglioside GT1b (d18:1(4E)) + CMP-N-acetyl-beta-neuraminate = a ganglioside GQ1b (d18:1(4E)) + CMP + H(+). The enzyme catalyses a ganglioside GM1b (d18:1(4E)) + CMP-N-acetyl-beta-neuraminate = a ganglioside GD1c (d18:1(4E)) + CMP + H(+). The catalysed reaction is a ganglioside GD3 + CMP-N-acetyl-beta-neuraminate = a ganglioside GT3 + CMP + H(+). It catalyses the reaction [alpha-N-acetylneuraminyl-(2-&gt;8)](n)-alpha-N-acetylneuraminyl-(2-&gt;8)-alpha-N-acetylneuraminyl-(2-&gt;3)-beta-D-galactosyl-(1-&gt;4)-beta-D-glucosyl-(1&lt;-&gt;1)-ceramide + CMP-N-acetyl-beta-neuraminate = [alpha-N-acetylneuraminyl-(2-&gt;8)](n+1)-alpha-N-acetylneuraminyl-(2-&gt;8)-alpha-N-acetylneuraminyl-(2-&gt;3)-beta-D-galactosyl-(1-&gt;4)-beta-D-glucosyl-(1&lt;-&gt;1)-ceramide + CMP + H(+). It functions in the pathway protein modification; protein glycosylation. The protein operates within lipid metabolism; sphingolipid metabolism. Functionally, catalyzes the addition of sialic acid in alpha 2,8-linkage to the sialic acid moiety of the ganglioside GM3 to form ganglioside GD3; gangliosides are a subfamily of complex glycosphingolipds that contain one or more residues of sialic acid. Can catalyze the addition of a second alpha-2,8- sialic acid to GD3 to form GT3. Can use GM1b, GD1a and GT1b as acceptor substrates to synthesize GD1c, GT1a and GQ1b respectively. The sequence is that of Alpha-N-acetylneuraminide alpha-2,8-sialyltransferase from Pan troglodytes (Chimpanzee).